The primary structure comprises 289 residues: MPSLKEIKERITSIKSTQKITSAMKMLASSKLKKAQYQMNCFLPYQRKLNAMLNSFLFCITDFKSDLTKKREIKRIALVIFSSNTSLCGTFNSNIIKLFNETISKYRYLNQKDIEVYTVGKKIEDYVRKLTFPLKVEGNYTQLIEKPNFARLKQLADKLLSDFLNQKIDKVELLYNHCKNAIFQTTNLEPYLPIQMKQPKSTSHADYIIEPDRDTVLNTLILRSLYSKIYAVLLNSVIAEHTARLVSMQIAIDNADEILEELTIQHNKQRQQTITNDLLDIISSSEALK.

It belongs to the ATPase gamma chain family. As to quaternary structure, F-type ATPases have 2 components, CF(1) - the catalytic core - and CF(0) - the membrane proton channel. CF(1) has five subunits: alpha(3), beta(3), gamma(1), delta(1), epsilon(1). CF(0) has three main subunits: a, b and c.

The protein localises to the cell inner membrane. Functionally, produces ATP from ADP in the presence of a proton gradient across the membrane. The gamma chain is believed to be important in regulating ATPase activity and the flow of protons through the CF(0) complex. The polypeptide is ATP synthase gamma chain (Azobacteroides pseudotrichonymphae genomovar. CFP2).